A 682-amino-acid polypeptide reads, in one-letter code: Polyadenylate-binding protein 5 (682 aa).

RRM domains are found at residues 59 to 136, 146 to 223, 239 to 316, and 342 to 419; these read SSLY…LSNR, GNVF…HFVR, TNVY…RAQK, and SNLY…LAQR. The region spanning 588–665 is the PABC domain; that stretch reads TISKLASDLA…ALDVLRRSAD (78 aa). Ser600 is modified (phosphoserine).

The protein belongs to the polyadenylate-binding protein type-1 family. In terms of tissue distribution, expressed predominantly in immature flowers but also at lower levels in mature flowers and siliques. Detected in tapetum, pollen, ovules and developing seeds. Also detected in primary inflorescences and immature siliques.

It is found in the cytoplasm. Its subcellular location is the nucleus. Binds the poly(A) tail of mRNA. Appears to be an important mediator of the multiple roles of the poly(A) tail in mRNA biogenesis, stability and translation. In Arabidopsis thaliana (Mouse-ear cress), this protein is Polyadenylate-binding protein 5 (PAB5).